The following is a 356-amino-acid chain: 5-formaminoimidazole-4-carboxamide-1-(beta)-D-ribofuranosyl 5'-monophosphate synthetase (356 aa).

Positions 27 and 94 each coordinate 5-amino-1-(5-phospho-beta-D-ribosyl)imidazole-4-carboxamide. An ATP-grasp domain is found at 101–333 (TENFADMAVP…YADLMEENLS (233 aa)). Residues 145 to 196 (PHDI…TRYY) and Glu-226 each bind ATP. Asn-255 lines the 5-amino-1-(5-phospho-beta-D-ribosyl)imidazole-4-carboxamide pocket. The Mg(2+) site is built by Glu-293 and Glu-306.

Belongs to the phosphohexose mutase family. Mg(2+) is required as a cofactor. It depends on Mn(2+) as a cofactor.

The catalysed reaction is 5-amino-1-(5-phospho-beta-D-ribosyl)imidazole-4-carboxamide + formate + ATP = 5-formamido-1-(5-phospho-D-ribosyl)imidazole-4-carboxamide + ADP + phosphate. Its pathway is purine metabolism; IMP biosynthesis via de novo pathway; 5-formamido-1-(5-phospho-D-ribosyl)imidazole-4-carboxamide from 5-amino-1-(5-phospho-D-ribosyl)imidazole-4-carboxamide (formate route): step 1/1. Functionally, catalyzes the ATP- and formate-dependent formylation of 5-aminoimidazole-4-carboxamide-1-beta-d-ribofuranosyl 5'-monophosphate (AICAR) to 5-formaminoimidazole-4-carboxamide-1-beta-d-ribofuranosyl 5'-monophosphate (FAICAR) in the absence of folates. In Methanosarcina barkeri (strain Fusaro / DSM 804), this protein is 5-formaminoimidazole-4-carboxamide-1-(beta)-D-ribofuranosyl 5'-monophosphate synthetase.